A 227-amino-acid polypeptide reads, in one-letter code: Small ribosomal subunit protein uS5 (227 aa).

Positions 1–22 (MSKRSNRSNNKNNTNKFNIENW) are disordered. A compositionally biased stretch (low complexity) spans 7–18 (RSNNKNNTNKFN). One can recognise an S5 DRBM domain in the interval 63-126 (LEEEVMDVNL…DAAKYNLIKV (64 aa)).

The protein belongs to the universal ribosomal protein uS5 family. Part of the 30S ribosomal subunit. Contacts protein S4.

Its function is as follows. With S4 and S12 plays an important role in translational accuracy. The sequence is that of Small ribosomal subunit protein uS5 from Methanosphaera stadtmanae (strain ATCC 43021 / DSM 3091 / JCM 11832 / MCB-3).